An 81-amino-acid chain; its full sequence is D-alanyl carrier protein (81 aa).

A Carrier domain is found at 1–81 (MADEAIKNGV…KIIAKVEQAQ (81 aa)). Residue Ser39 is modified to O-(pantetheine 4'-phosphoryl)serine.

Belongs to the DltC family. 4'-phosphopantetheine is transferred from CoA to a specific serine of apo-DCP.

It is found in the cytoplasm. The protein operates within cell wall biogenesis; lipoteichoic acid biosynthesis. Functionally, carrier protein involved in the D-alanylation of lipoteichoic acid (LTA). The loading of thioester-linked D-alanine onto DltC is catalyzed by D-alanine--D-alanyl carrier protein ligase DltA. The DltC-carried D-alanyl group is further transferred to cell membrane phosphatidylglycerol (PG) by forming an ester bond, probably catalyzed by DltD. D-alanylation of LTA plays an important role in modulating the properties of the cell wall in Gram-positive bacteria, influencing the net charge of the cell wall. In Lacticaseibacillus casei (strain BL23) (Lactobacillus casei), this protein is D-alanyl carrier protein.